Consider the following 551-residue polypeptide: Cytochrome c oxidase subunit 1 (551 aa).

A helical transmembrane segment spans residues 29-49 (VIGIQYLVTSFLFFFIGGSFA). A Fe(II)-heme a-binding site is contributed by His76. A run of 11 helical transmembrane segments spans residues 79-99 (IMIF…LIPL), 113-133 (AVAF…FFVG), 156-176 (LWIL…INFV), 205-225 (LILL…FDLI), 245-265 (LFWF…FGVI), 283-303 (IAYS…HHMF), 313-333 (MFFM…IFSW), 348-368 (MLFA…GVMV), 382-402 (FVVG…LFSG), 424-444 (FILT…LGLM), and 466-486 (IGAY…FWSL). Residues His251, Tyr255, His300, and His301 each contribute to the Cu cation site. The 1'-histidyl-3'-tyrosine (His-Tyr) cross-link spans 251–255 (HPAVY). His386 contributes to the heme a3 binding site. Residue His388 coordinates Fe(II)-heme a.

Belongs to the heme-copper respiratory oxidase family. It depends on Cu(2+) as a cofactor. The cofactor is heme.

The protein localises to the cell membrane. It carries out the reaction 4 Fe(II)-[cytochrome c] + O2 + 8 H(+)(in) = 4 Fe(III)-[cytochrome c] + 2 H2O + 4 H(+)(out). The protein operates within energy metabolism; oxidative phosphorylation. Functionally, cytochrome c oxidase is the component of the respiratory chain that catalyzes the reduction of oxygen to water. Subunits 1-3 form the functional core of the enzyme complex. CO I is the catalytic subunit of the enzyme. Electrons originating in cytochrome c are transferred via the copper A center of subunit 2 and heme A of subunit 1 to the bimetallic center formed by heme A3 and copper B. This chain is Cytochrome c oxidase subunit 1 (ctaD), found in Synechocystis sp. (strain ATCC 27184 / PCC 6803 / Kazusa).